The primary structure comprises 105 residues: Urease subunit gamma (105 aa).

It belongs to the urease gamma subunit family. As to quaternary structure, heterotrimer of UreA (gamma), UreB (beta) and UreC (alpha) subunits. Three heterotrimers associate to form the active enzyme.

The protein localises to the cytoplasm. The catalysed reaction is urea + 2 H2O + H(+) = hydrogencarbonate + 2 NH4(+). It functions in the pathway nitrogen metabolism; urea degradation; CO(2) and NH(3) from urea (urease route): step 1/1. This is Urease subunit gamma from Bacillus subtilis (strain 168).